Here is a 344-residue protein sequence, read N- to C-terminus: GTPase Obg (344 aa).

In terms of domain architecture, Obg spans 1 to 159 (MKFLDLAKVY…RTIWLRLKLI (159 aa)). In terms of domain architecture, OBG-type G spans 160 to 326 (ADVGLLGLPN…VLRVLRARVD (167 aa)). GTP contacts are provided by residues 166-173 (GLPNAGKS), 191-195 (FTTLV), 212-215 (DIPG), 279-282 (NKID), and 307-309 (SGV). The Mg(2+) site is built by serine 173 and threonine 193.

The protein belongs to the TRAFAC class OBG-HflX-like GTPase superfamily. OBG GTPase family. Monomer. Mg(2+) serves as cofactor.

It is found in the cytoplasm. An essential GTPase which binds GTP, GDP and possibly (p)ppGpp with moderate affinity, with high nucleotide exchange rates and a fairly low GTP hydrolysis rate. Plays a role in control of the cell cycle, stress response, ribosome biogenesis and in those bacteria that undergo differentiation, in morphogenesis control. The chain is GTPase Obg from Jannaschia sp. (strain CCS1).